The following is a 257-amino-acid chain: Imidazole glycerol phosphate synthase subunit HisF (257 aa).

Active-site residues include D11 and D130.

It belongs to the HisA/HisF family. As to quaternary structure, heterodimer of HisH and HisF.

It is found in the cytoplasm. It carries out the reaction 5-[(5-phospho-1-deoxy-D-ribulos-1-ylimino)methylamino]-1-(5-phospho-beta-D-ribosyl)imidazole-4-carboxamide + L-glutamine = D-erythro-1-(imidazol-4-yl)glycerol 3-phosphate + 5-amino-1-(5-phospho-beta-D-ribosyl)imidazole-4-carboxamide + L-glutamate + H(+). It functions in the pathway amino-acid biosynthesis; L-histidine biosynthesis; L-histidine from 5-phospho-alpha-D-ribose 1-diphosphate: step 5/9. In terms of biological role, IGPS catalyzes the conversion of PRFAR and glutamine to IGP, AICAR and glutamate. The HisF subunit catalyzes the cyclization activity that produces IGP and AICAR from PRFAR using the ammonia provided by the HisH subunit. This chain is Imidazole glycerol phosphate synthase subunit HisF, found in Shewanella sp. (strain ANA-3).